Reading from the N-terminus, the 545-residue chain is Periplasmic trehalase (545 aa).

The signal sequence occupies residues 1 to 30; it reads MPDRTALPRAMLAAWVLLLLAACSQGPAPT. Substrate is bound by residues Arg-160, 167–168, Asn-204, 213–215, 285–287, and Gly-318; these read WD, RSQ, and RQE. Active-site proton donor/acceptor residues include Asp-320 and Glu-503. Glu-518 contributes to the substrate binding site.

Belongs to the glycosyl hydrolase 37 family.

It localises to the periplasm. It carries out the reaction alpha,alpha-trehalose + H2O = alpha-D-glucose + beta-D-glucose. Its function is as follows. Provides the cells with the ability to utilize trehalose at high osmolarity by splitting it into glucose molecules that can subsequently be taken up by the phosphotransferase-mediated uptake system. The protein is Periplasmic trehalase of Pseudomonas aeruginosa (strain ATCC 15692 / DSM 22644 / CIP 104116 / JCM 14847 / LMG 12228 / 1C / PRS 101 / PAO1).